A 261-amino-acid polypeptide reads, in one-letter code: Global transcriptional regulator CodY (261 aa).

Residues 1–159 form a GAF domain region; that stretch reads MANLLDKTRK…ASTVVGLQLL (159 aa). Residues 207 to 226 constitute a DNA-binding region (H-T-H motif); that stretch reads ASVIADRIGITRSVIVNALR.

Belongs to the CodY family.

Its subcellular location is the cytoplasm. Its function is as follows. DNA-binding global transcriptional regulator which is involved in the adaptive response to starvation and acts by directly or indirectly controlling the expression of numerous genes in response to nutrient availability. During rapid exponential growth, CodY is highly active and represses genes whose products allow adaptation to nutrient depletion. In Streptococcus thermophilus (strain CNRZ 1066), this protein is Global transcriptional regulator CodY.